Reading from the N-terminus, the 341-residue chain is ATP-dependent 6-phosphofructokinase 3 (341 aa).

Residues glycine 10, 72–73, and 102–105 contribute to the ATP site; these read RV and GEGT. A Mg(2+)-binding site is contributed by glutamate 103. Substrate contacts are provided by residues 125–127, arginine 162, 169–171, glutamate 222, arginine 266, and 272–275; these read TID, MGR, and HVQR. Aspartate 127 functions as the Proton acceptor in the catalytic mechanism.

The protein belongs to the phosphofructokinase type A (PFKA) family. Mixed-substrate PFK group III subfamily. In terms of assembly, homodimer or homotetramer. It depends on Mg(2+) as a cofactor.

It localises to the cytoplasm. The catalysed reaction is beta-D-fructose 6-phosphate + ATP = beta-D-fructose 1,6-bisphosphate + ADP + H(+). The protein operates within carbohydrate degradation; glycolysis; D-glyceraldehyde 3-phosphate and glycerone phosphate from D-glucose: step 3/4. In terms of biological role, catalyzes the phosphorylation of D-fructose 6-phosphate to fructose 1,6-bisphosphate by ATP, the first committing step of glycolysis. The polypeptide is ATP-dependent 6-phosphofructokinase 3 (Streptomyces coelicolor (strain ATCC BAA-471 / A3(2) / M145)).